A 400-amino-acid polypeptide reads, in one-letter code: 3-phenylpropionate/cinnamic acid dioxygenase ferredoxin--NAD(+) reductase component (400 aa).

5–36 contributes to the FAD binding site; the sequence is TIIIVGGGQAAAMAAASLRQQGFTGELHLFSD. Residue 146-174 coordinates NAD(+); it reads SVVIVGAGTIGLELAASATQRGCKVTVIE.

It belongs to the bacterial ring-hydroxylating dioxygenase ferredoxin reductase family. As to quaternary structure, this dioxygenase system consists of four proteins: the two subunits of the hydroxylase component (HcaE and HcaF), a ferredoxin (HcaC) and a ferredoxin reductase (HcaD). It depends on FAD as a cofactor.

It carries out the reaction 2 reduced [2Fe-2S]-[ferredoxin] + NAD(+) + H(+) = 2 oxidized [2Fe-2S]-[ferredoxin] + NADH. It functions in the pathway aromatic compound metabolism; 3-phenylpropanoate degradation. Part of the multicomponent 3-phenylpropionate dioxygenase, that converts 3-phenylpropionic acid (PP) and cinnamic acid (CI) into 3-phenylpropionate-dihydrodiol (PP-dihydrodiol) and cinnamic acid-dihydrodiol (CI-dihydrodiol), respectively. This Escherichia coli O17:K52:H18 (strain UMN026 / ExPEC) protein is 3-phenylpropionate/cinnamic acid dioxygenase ferredoxin--NAD(+) reductase component.